The sequence spans 709 residues: DNA topoisomerase 1 (709 aa).

Residues 3–127 (KNLVVIESPN…KCKRITFNEI (125 aa)) enclose the Toprim domain. Positions 9 and 95 each coordinate Mg(2+). A Topo IA-type catalytic domain is found at 143–598 (DLNWVESQFA…FWTNFKSDVK (456 aa)). The segment at 176–181 (SAGRVQ) is interaction with DNA. Y334 (O-(5'-phospho-DNA)-tyrosine intermediate) is an active-site residue. C4-type zinc fingers lie at residues 618–646 (CPKC…FPKC) and 667–696 (CPEC…FPNC).

It belongs to the type IA topoisomerase family. As to quaternary structure, monomer. It depends on Mg(2+) as a cofactor.

The catalysed reaction is ATP-independent breakage of single-stranded DNA, followed by passage and rejoining.. In terms of biological role, releases the supercoiling and torsional tension of DNA, which is introduced during the DNA replication and transcription, by transiently cleaving and rejoining one strand of the DNA duplex. Introduces a single-strand break via transesterification at a target site in duplex DNA. The scissile phosphodiester is attacked by the catalytic tyrosine of the enzyme, resulting in the formation of a DNA-(5'-phosphotyrosyl)-enzyme intermediate and the expulsion of a 3'-OH DNA strand. The free DNA strand then undergoes passage around the unbroken strand, thus removing DNA supercoils. Finally, in the religation step, the DNA 3'-OH attacks the covalent intermediate to expel the active-site tyrosine and restore the DNA phosphodiester backbone. The sequence is that of DNA topoisomerase 1 from Mycoplasma genitalium (strain ATCC 33530 / DSM 19775 / NCTC 10195 / G37) (Mycoplasmoides genitalium).